Consider the following 89-residue polypeptide: Small ribosomal subunit protein uS15 (89 aa).

The span at 1-21 shows a compositional bias: basic and acidic residues; sequence MALSKEQKTETLKEFGLHETD. A disordered region spans residues 1-22; sequence MALSKEQKTETLKEFGLHETDT.

It belongs to the universal ribosomal protein uS15 family. As to quaternary structure, part of the 30S ribosomal subunit. Forms a bridge to the 50S subunit in the 70S ribosome, contacting the 23S rRNA.

Its function is as follows. One of the primary rRNA binding proteins, it binds directly to 16S rRNA where it helps nucleate assembly of the platform of the 30S subunit by binding and bridging several RNA helices of the 16S rRNA. Functionally, forms an intersubunit bridge (bridge B4) with the 23S rRNA of the 50S subunit in the ribosome. In Corynebacterium jeikeium (strain K411), this protein is Small ribosomal subunit protein uS15.